The sequence spans 220 residues: CDP-diacylglycerol--inositol 3-phosphatidyltransferase (220 aa).

Residues M1–P20 are Cytoplasmic-facing. The chain crosses the membrane as a helical span at residues N21 to H41. Residues P42–F45 are Lumenal-facing. A helical transmembrane segment spans residues T46 to Y66. Mg(2+)-binding residues include D56 and D59. A CDP-1,2-diacyl-sn-glycerol contacts are provided by G60, R64, and S70. The Cytoplasmic portion of the chain corresponds to N67–V75. A helical transmembrane segment spans residues L76–Y96. Mg(2+) is bound by residues D77 and D81. D81 functions as the Proton acceptor in the catalytic mechanism. Over P97–Q98 the chain is Lumenal. The helical transmembrane segment at W99 to Y119 threads the bilayer. Residues A120 to T145 are Cytoplasmic-facing. A helical membrane pass occupies residues R146–L166. At Q167–S170 the chain is on the lumenal side. Residues N171–Q191 form a helical membrane-spanning segment. Over T192 to Y220 the chain is Cytoplasmic.

It belongs to the CDP-alcohol phosphatidyltransferase class-I family. The cofactor is Mn(2+). It depends on Mg(2+) as a cofactor.

It localises to the microsome membrane. The protein localises to the endoplasmic reticulum membrane. Its subcellular location is the golgi apparatus membrane. The protein resides in the mitochondrion outer membrane. It catalyses the reaction a CDP-1,2-diacyl-sn-glycerol + myo-inositol = a 1,2-diacyl-sn-glycero-3-phospho-(1D-myo-inositol) + CMP + H(+). Catalyzes the synthesis of phosphatidylinositol (PtdIns). The protein is CDP-diacylglycerol--inositol 3-phosphatidyltransferase of Saccharomyces cerevisiae (strain ATCC 204508 / S288c) (Baker's yeast).